The sequence spans 145 residues: Alpha-amylase/trypsin inhibitor CM1 (145 aa).

An N-terminal signal peptide occupies residues methionine 1–alanine 25.

The protein belongs to the protease inhibitor I6 (cereal trypsin/alpha-amylase inhibitor) family. In terms of assembly, subunit of the tetrameric inhibitor. Endosperm.

The protein localises to the secreted. Alpha-amylase/trypsin inhibitor. It could be involved in insect defense mechanisms. The chain is Alpha-amylase/trypsin inhibitor CM1 from Triticum aestivum (Wheat).